Reading from the N-terminus, the 1171-residue chain is Kinesin-like protein GA13060 (1171 aa).

The segment at 1 to 24 (MASSISRNGGFCGALQRAPPPMPP) is disordered. The Kinesin motor domain occupies 40 to 400 (KVKVMLRVSD…IQIASRIHRL (361 aa)). 5 disordered regions span residues 737–774 (LLGQ…GSRD), 798–820 (LVAS…SQRS), 932–955 (PAYR…SLPS), 1043–1099 (TSSE…QRHR), and 1124–1143 (RHSH…EGNG). Residues 805-816 (SSHHQHQHHRPS) are compositionally biased toward basic residues. The span at 1043–1059 (TSSEAYDSGHDSNSTPR) shows a compositional bias: polar residues. The span at 1124–1139 (RHSHGVGGHKKHRHRH) shows a compositional bias: basic residues.

The protein belongs to the TRAFAC class myosin-kinesin ATPase superfamily. Kinesin family. KIF26 subfamily.

The protein resides in the cytoplasm. It is found in the cytoskeleton. The polypeptide is Kinesin-like protein GA13060 (Drosophila pseudoobscura pseudoobscura (Fruit fly)).